We begin with the raw amino-acid sequence, 132 residues long: Small ribosomal subunit protein uS11 (132 aa).

Belongs to the universal ribosomal protein uS11 family. Part of the 30S ribosomal subunit. Interacts with proteins S7 and S18. Binds to IF-3.

Functionally, located on the platform of the 30S subunit, it bridges several disparate RNA helices of the 16S rRNA. Forms part of the Shine-Dalgarno cleft in the 70S ribosome. The chain is Small ribosomal subunit protein uS11 from Clostridioides difficile (strain 630) (Peptoclostridium difficile).